Consider the following 392-residue polypeptide: 8-amino-7-oxononanoate synthase (392 aa).

Position 108–109 (108–109 (GF)) interacts with pyridoxal 5'-phosphate. Substrate is bound at residue histidine 133. Pyridoxal 5'-phosphate-binding positions include serine 180, 205-208 (DDAH), and 236-239 (TLSK). Lysine 239 bears the N6-(pyridoxal phosphate)lysine mark. Substrate is bound at residue threonine 353.

This sequence belongs to the class-II pyridoxal-phosphate-dependent aminotransferase family. BioF subfamily. In terms of assembly, homodimer. Pyridoxal 5'-phosphate serves as cofactor.

The enzyme catalyses 6-carboxyhexanoyl-[ACP] + L-alanine + H(+) = (8S)-8-amino-7-oxononanoate + holo-[ACP] + CO2. Its pathway is cofactor biosynthesis; biotin biosynthesis. Functionally, catalyzes the decarboxylative condensation of pimeloyl-[acyl-carrier protein] and L-alanine to produce 8-amino-7-oxononanoate (AON), [acyl-carrier protein], and carbon dioxide. This is 8-amino-7-oxononanoate synthase from Bacillus pumilus (strain SAFR-032).